Here is a 268-residue protein sequence, read N- to C-terminus: 3-deoxy-manno-octulosonate cytidylyltransferase (268 aa).

This sequence belongs to the KdsB family.

The protein resides in the cytoplasm. It carries out the reaction 3-deoxy-alpha-D-manno-oct-2-ulosonate + CTP = CMP-3-deoxy-beta-D-manno-octulosonate + diphosphate. It functions in the pathway nucleotide-sugar biosynthesis; CMP-3-deoxy-D-manno-octulosonate biosynthesis; CMP-3-deoxy-D-manno-octulosonate from 3-deoxy-D-manno-octulosonate and CTP: step 1/1. The protein operates within bacterial outer membrane biogenesis; lipopolysaccharide biosynthesis. Functionally, activates KDO (a required 8-carbon sugar) for incorporation into bacterial lipopolysaccharide in Gram-negative bacteria. This chain is 3-deoxy-manno-octulosonate cytidylyltransferase, found in Psychrobacter cryohalolentis (strain ATCC BAA-1226 / DSM 17306 / VKM B-2378 / K5).